Consider the following 573-residue polypeptide: 2-succinyl-5-enolpyruvyl-6-hydroxy-3-cyclohexene-1-carboxylate synthase (573 aa).

It belongs to the TPP enzyme family. MenD subfamily. In terms of assembly, homodimer. Mg(2+) serves as cofactor. The cofactor is Mn(2+). It depends on thiamine diphosphate as a cofactor.

The catalysed reaction is isochorismate + 2-oxoglutarate + H(+) = 5-enolpyruvoyl-6-hydroxy-2-succinyl-cyclohex-3-ene-1-carboxylate + CO2. The protein operates within quinol/quinone metabolism; 1,4-dihydroxy-2-naphthoate biosynthesis; 1,4-dihydroxy-2-naphthoate from chorismate: step 2/7. It functions in the pathway quinol/quinone metabolism; menaquinone biosynthesis. In terms of biological role, catalyzes the thiamine diphosphate-dependent decarboxylation of 2-oxoglutarate and the subsequent addition of the resulting succinic semialdehyde-thiamine pyrophosphate anion to isochorismate to yield 2-succinyl-5-enolpyruvyl-6-hydroxy-3-cyclohexene-1-carboxylate (SEPHCHC). The protein is 2-succinyl-5-enolpyruvyl-6-hydroxy-3-cyclohexene-1-carboxylate synthase of Shewanella sp. (strain ANA-3).